A 906-amino-acid chain; its full sequence is Ribonucleoside-diphosphate reductase large subunit-like protein (906 aa).

2 disordered regions span residues 1-70 and 89-129; these read MNPA…AGNT and VSWR…LSTF. A compositionally biased stretch (polar residues) spans 98 to 109; sequence PDGTPSVLSLTR.

The protein belongs to the ribonucleoside diphosphate reductase large chain family.

The protein resides in the virion. It localises to the host cytoplasm. Its function is as follows. Does not possess a ribonucleotide reductase activity. Betaherpesviruses probably use another strategy to expand the dNTP pool in a quiescent host cell. The sequence is that of Ribonucleoside-diphosphate reductase large subunit-like protein from Human cytomegalovirus (strain AD169) (HHV-5).